Reading from the N-terminus, the 1575-residue chain is Lysophospholipase NTE1 (1575 aa).

Residues 1–56 (MNLTTTMPAAVAPDPPAQLAVSSRSLSDSSDAAGASRTSSSCRASSPSHCPTHAWN) are disordered. Topologically, residues 1–99 (MNLTTTMPAA…TLSPPNLLQG (99 aa)) are cytoplasmic. The span at 19 to 48 (LAVSSRSLSDSSDAAGASRTSSSCRASSPS) shows a compositional bias: low complexity. A helical transmembrane segment spans residues 100–120 (IVSQLAMASYIGRLLLYLFQV). The Lumenal segment spans residues 121-151 (VPSLLYWAITFTTITVPTALFTLFSMSLTFT). The chain crosses the membrane as a helical span at residues 152–172 (MNFTTLLIIVLLLVSTVSWFI). At 173–1575 (RYRFLNIYSR…RTMAPRRASI (1403 aa)) the chain is on the cytoplasmic side. 2 disordered regions span residues 339–425 (DMES…AKSV) and 568–587 (GSAS…VSPG). Over residues 409 to 424 (RGHRRKRPSRPKRAKS) the composition is skewed to basic residues. Residues 737-856 (GGTS…TSYR) and 894-1014 (RLTT…IAQR) contribute to the a nucleoside 3',5'-cyclic phosphate site. Positions 1272–1436 (LVLGGGGARG…VDNLTVARMK (165 aa)) constitute a PNPLA domain. The short motif at 1276 to 1281 (GGGARG) is the GXGXXG element. The GXSXG motif lies at 1303-1307 (GTSIG). Ser-1305 (nucleophile) is an active-site residue. The active-site Proton acceptor is Asp-1423. The DGA/G signature appears at 1423-1425 (DGG).

Belongs to the NTE family.

The protein resides in the endoplasmic reticulum membrane. The catalysed reaction is a 1-acyl-sn-glycero-3-phosphocholine + H2O = sn-glycerol 3-phosphocholine + a fatty acid + H(+). With respect to regulation, inhibited by organophosphorus esters. Intracellular phospholipase B that catalyzes the double deacylation of phosphatidylcholine (PC) to glycerophosphocholine (GroPCho). Plays an important role in membrane lipid homeostasis. Responsible for the rapid PC turnover in response to inositol, elevated temperatures, or when choline is present in the growth medium. In Coccidioides immitis (strain RS) (Valley fever fungus), this protein is Lysophospholipase NTE1 (NTE1).